The chain runs to 254 residues: Imidazole glycerol phosphate synthase subunit HisF (254 aa).

Residues Asp-12 and Asp-131 contribute to the active site.

It belongs to the HisA/HisF family. In terms of assembly, heterodimer of HisH and HisF.

The protein resides in the cytoplasm. It catalyses the reaction 5-[(5-phospho-1-deoxy-D-ribulos-1-ylimino)methylamino]-1-(5-phospho-beta-D-ribosyl)imidazole-4-carboxamide + L-glutamine = D-erythro-1-(imidazol-4-yl)glycerol 3-phosphate + 5-amino-1-(5-phospho-beta-D-ribosyl)imidazole-4-carboxamide + L-glutamate + H(+). It functions in the pathway amino-acid biosynthesis; L-histidine biosynthesis; L-histidine from 5-phospho-alpha-D-ribose 1-diphosphate: step 5/9. Functionally, IGPS catalyzes the conversion of PRFAR and glutamine to IGP, AICAR and glutamate. The HisF subunit catalyzes the cyclization activity that produces IGP and AICAR from PRFAR using the ammonia provided by the HisH subunit. The protein is Imidazole glycerol phosphate synthase subunit HisF of Corynebacterium aurimucosum (strain ATCC 700975 / DSM 44827 / CIP 107346 / CN-1) (Corynebacterium nigricans).